A 328-amino-acid chain; its full sequence is D-cysteine desulfhydrase (328 aa).

The residue at position 51 (K51) is an N6-(pyridoxal phosphate)lysine.

This sequence belongs to the ACC deaminase/D-cysteine desulfhydrase family. As to quaternary structure, homodimer. Requires pyridoxal 5'-phosphate as cofactor.

It carries out the reaction D-cysteine + H2O = hydrogen sulfide + pyruvate + NH4(+) + H(+). Functionally, catalyzes the alpha,beta-elimination reaction of D-cysteine and of several D-cysteine derivatives. It could be a defense mechanism against D-cysteine. This Klebsiella pneumoniae subsp. pneumoniae (strain ATCC 700721 / MGH 78578) protein is D-cysteine desulfhydrase.